A 440-amino-acid polypeptide reads, in one-letter code: Thymidine phosphorylase (440 aa).

It belongs to the thymidine/pyrimidine-nucleoside phosphorylase family. As to quaternary structure, homodimer.

The enzyme catalyses thymidine + phosphate = 2-deoxy-alpha-D-ribose 1-phosphate + thymine. It participates in pyrimidine metabolism; dTMP biosynthesis via salvage pathway; dTMP from thymine: step 1/2. Its function is as follows. The enzymes which catalyze the reversible phosphorolysis of pyrimidine nucleosides are involved in the degradation of these compounds and in their utilization as carbon and energy sources, or in the rescue of pyrimidine bases for nucleotide synthesis. This is Thymidine phosphorylase from Escherichia coli O127:H6 (strain E2348/69 / EPEC).